The chain runs to 144 residues: MTIFSRFSYFDSLFSFKKQEPSPIEIIYCNENNGFINIKSLESPTDDSMEADISDREMATILTRNRNNLGKVAIDKKGVNNHCIDLNELKKGLVANEHKLDNDNSTRHQNTYSPEDSVEFDRFDDKQSRILKCSTRRSYLRYKK.

This is an uncharacterized protein from Saccharomyces cerevisiae (strain ATCC 204508 / S288c) (Baker's yeast).